A 163-amino-acid polypeptide reads, in one-letter code: Type II secretion system protein M (163 aa).

Over 1–19 (MMDKLQGWWRSISAREQRL) the chain is Cytoplasmic. A helical membrane pass occupies residues 20 to 40 (VAVGGSCLLIGFCYWIVWQPI). Residues 41–163 (ANRIAERERQ…VRRLQLSRPQ (123 aa)) lie on the Periplasmic side of the membrane.

This sequence belongs to the GSP M family. Type II secretion system is composed of four main components: the outer membrane complex, the inner membrane complex, the cytoplasmic secretion ATPase and the periplasm-spanning pseudopilus. Forms homodimers. Interacts with ExeL/GspL. Interacts with ExeE/GspE and ExeF/GspF.

Its subcellular location is the cell inner membrane. Functionally, inner membrane component of the type II secretion system required for the energy-dependent secretion of extracellular factors such as proteases and toxins from the periplasm. Plays a role in the complex assembly and recruits ExeL resulting in a stable complex in the inner membrane. Provides thus a link between the energy-providing ExeE protein in the cytoplasm and the rest of the T2SS machinery. The sequence is that of Type II secretion system protein M (exeM) from Aeromonas hydrophila.